A 487-amino-acid polypeptide reads, in one-letter code: UDP-glucose flavonoid 3-O-glucosyltransferase 7 (487 aa).

Catalysis depends on histidine 23, which acts as the Proton acceptor. Histidine 23 is a binding site for an anthocyanidin. The active-site Charge relay is the aspartate 121. UDP-alpha-D-glucose is bound by residues alanine 345, glutamine 347, histidine 362, tryptophan 365, asparagine 366, serine 367, and glutamate 370. An an anthocyanidin-binding site is contributed by glycine 385. Glutamate 386 and glutamine 387 together coordinate UDP-alpha-D-glucose.

It belongs to the UDP-glycosyltransferase family. As to expression, strongly expressed in achenes and receptacles.

It carries out the reaction a flavonol + UDP-alpha-D-glucose = a flavonol 3-O-beta-D-glucoside + UDP + H(+). Broad spectrum multifunctional glucosyltransferase. Catalyzes the formation of flavonol 3-O- and 4'-O-glucosides during fruit ripening. Accepted substrates include several flavonoids, hydroxycoumarins and beta-naphthols. Uses UDP-Glc as a sugar donor, but not UDP-Gal or UDP-GlcUA. May also be involved in detoxification of xenobiotics. The polypeptide is UDP-glucose flavonoid 3-O-glucosyltransferase 7 (Fragaria ananassa (Strawberry)).